Reading from the N-terminus, the 329-residue chain is DNA-directed RNA polymerase subunit alpha (329 aa).

Positions 1–235 (MQGSVTEFLK…EQLDAFVDLR (235 aa)) are alpha N-terminal domain (alpha-NTD). The tract at residues 249–329 (FDPILLRPVD…NWPPASIAED (81 aa)) is alpha C-terminal domain (alpha-CTD).

The protein belongs to the RNA polymerase alpha chain family. Homodimer. The RNAP catalytic core consists of 2 alpha, 1 beta, 1 beta' and 1 omega subunit. When a sigma factor is associated with the core the holoenzyme is formed, which can initiate transcription.

The enzyme catalyses RNA(n) + a ribonucleoside 5'-triphosphate = RNA(n+1) + diphosphate. Functionally, DNA-dependent RNA polymerase catalyzes the transcription of DNA into RNA using the four ribonucleoside triphosphates as substrates. The chain is DNA-directed RNA polymerase subunit alpha from Aliivibrio salmonicida (strain LFI1238) (Vibrio salmonicida (strain LFI1238)).